We begin with the raw amino-acid sequence, 144 residues long: Putative sugar phosphate isomerase RC0402 (144 aa).

Histidine 12 lines the substrate pocket. Histidine 101 functions as the Proton donor in the catalytic mechanism. Arginine 135 contacts substrate.

It belongs to the LacAB/RpiB family.

The protein is Putative sugar phosphate isomerase RC0402 of Rickettsia conorii (strain ATCC VR-613 / Malish 7).